Reading from the N-terminus, the 290-residue chain is MRSHILGRIELDQERLGRDLEYLATVPTVEEEYDEFSNGFWKNIPLYNASGGSEDRLYRDLEGSPAQPTKHAEQVPYLNEIITTVYNGERLQMARTRNLKNAVVIPHRDFVELDRELDQYFRTHLMLEDSPLAFHSDDDTVIHMRAGEIWFLDAAAVHSAVNFAEFSRQSLCVDLAFDGAFDEKEAFADATVYAPNLSPDVRERKPFTKEREAGILALSGVIGRENFRDILFLLSKVHYTYDVHPGETFEWLVSVSKGAGDDKMVEKAERIRDFAIGARALGERFSLTTW.

Residues His107, Asp109, and His158 each coordinate Fe cation. Arg168 is a 2-oxoglutarate binding site.

It belongs to the L-proline cis-4-/cis-3-hydroxylase family. Homodimer. Fe(2+) serves as cofactor.

It carries out the reaction L-proline + 2-oxoglutarate + O2 = cis-3-hydroxy-L-proline + succinate + CO2. Inhibited by metal ions such as Co(2+), Zn(2+), Ni(2+) or Cu(2+). Is also inhibited by EDTA in vitro. Unlike the procollagen-proline cis-3- and trans-4-hydroxylases from mammals, does not necessarily require L-ascorbate for activity although it does increase the activity of the enzyme. In terms of biological role, dioxygenase that catalyzes the 2-oxoglutarate-dependent selective hydroxylation of free L-proline to cis-3-hydroxy-L-proline (cis-3-Hyp). D-proline, trans-4-hydroxy-L-proline, cis-4-hydroxy-L-proline, cis-4-hydroxy-D-proline, and 3,4-dehydro-DL-proline are not substrates. This chain is L-proline cis-3-hydroxylase 1, found in Streptomyces sp.